Consider the following 569-residue polypeptide: Oxygen-dependent choline dehydrogenase (569 aa).

9 to 38 (DYVIIGGGSAGSVLGNRLSEDKDKEVLVLE) serves as a coordination point for FAD. Residue histidine 475 is the Proton acceptor of the active site.

This sequence belongs to the GMC oxidoreductase family. It depends on FAD as a cofactor.

It catalyses the reaction choline + A = betaine aldehyde + AH2. The enzyme catalyses betaine aldehyde + NAD(+) + H2O = glycine betaine + NADH + 2 H(+). It participates in amine and polyamine biosynthesis; betaine biosynthesis via choline pathway; betaine aldehyde from choline (cytochrome c reductase route): step 1/1. Its function is as follows. Involved in the biosynthesis of the osmoprotectant glycine betaine. Catalyzes the oxidation of choline to betaine aldehyde and betaine aldehyde to glycine betaine at the same rate. The chain is Oxygen-dependent choline dehydrogenase from Staphylococcus aureus (strain MSSA476).